The sequence spans 303 residues: Phosphatidylglycerol--prolipoprotein diacylglyceryl transferase (303 aa).

The next 4 membrane-spanning stretches (helical) occupy residues 18 to 38 (LGPF…LVGL), 58 to 78 (LLPI…VAFE), 106 to 126 (IWGG…SIIF), and 133 to 153 (EPFW…QAIG). Arg154 serves as a coordination point for a 1,2-diacyl-sn-glycero-3-phospho-(1'-sn-glycerol). Transmembrane regions (helical) follow at residues 193–213 (PTFL…IFLF), 223–243 (LPPG…RFWI), and 266–286 (IAQL…WRIY).

The protein belongs to the Lgt family.

It is found in the cell inner membrane. It carries out the reaction L-cysteinyl-[prolipoprotein] + a 1,2-diacyl-sn-glycero-3-phospho-(1'-sn-glycerol) = an S-1,2-diacyl-sn-glyceryl-L-cysteinyl-[prolipoprotein] + sn-glycerol 1-phosphate + H(+). It functions in the pathway protein modification; lipoprotein biosynthesis (diacylglyceryl transfer). Functionally, catalyzes the transfer of the diacylglyceryl group from phosphatidylglycerol to the sulfhydryl group of the N-terminal cysteine of a prolipoprotein, the first step in the formation of mature lipoproteins. The chain is Phosphatidylglycerol--prolipoprotein diacylglyceryl transferase from Prochlorococcus marinus (strain NATL1A).